Consider the following 296-residue polypeptide: Chondrolectin (296 aa).

An N-terminal signal peptide occupies residues 1-20; the sequence is MRATLRILCALTFLVSCSRG. The Extracellular segment spans residues 21-238; it reads ARVVSGQTVC…RLIIAGPSSM (218 aa). Residues 38–187 enclose the C-type lectin domain; the sequence is CYKIAYFKDV…CNMKHNFICK (150 aa). Over residues 197–221 the composition is skewed to basic and acidic residues; that stretch reads VQSDRPGGHDVDLSTEDKEDRRTPP. Residues 197 to 229 form a disordered region; it reads VQSDRPGGHDVDLSTEDKEDRRTPPTDEDESPR. The chain crosses the membrane as a helical span at residues 239–266; it reads LLIYVIIPTIPLLLLILVASGTCCFQML. Over 267–296 the chain is Cytoplasmic; that stretch reads SKSKPRTKTSVNQSTLWISKTPKIDSGMEV.

Expressed in developing motor neurons.

It localises to the membrane. Plays a role in the development of the nervous system such as in neurite outgrowth and elongation. Involved in motor axon growth and guidance. Required for correct interactions of motor axons with the horizontal myoseptum. The sequence is that of Chondrolectin (chodl) from Danio rerio (Zebrafish).